Here is a 303-residue protein sequence, read N- to C-terminus: DCN1-like protein 3 (303 aa).

Disordered stretches follow at residues 1 to 41 and 62 to 83; these read MGQC…HLSI and EASQ…TGAE. G2 carries the N-myristoyl glycine lipid modification. A DCUN1 domain is found at 85-277; sequence SSVQRIEELF…LFDTFVEWEM (193 aa). The segment at 284 to 303 is disordered; it reads EETKCIPCSGTDDQSTEGQT. Over residues 294–303 the composition is skewed to polar residues; that stretch reads TDDQSTEGQT.

As to quaternary structure, may interact (via the DCUN1 domain) with unneddylated cullins.

Its subcellular location is the cell membrane. It localises to the cytoplasm. The protein resides in the nucleus. The protein localises to the perinuclear region. Its function is as follows. Contributes to the neddylation of all cullins by transferring NEDD8 from N-terminally acetylated NEDD8-conjugating E2s enzyme to different cullin C-terminal domain-RBX complexes. At the cell membrane, can promote and as well inhibit cullins neddylation. In Xenopus tropicalis (Western clawed frog), this protein is DCN1-like protein 3.